The following is a 947-amino-acid chain: Protein NETWORKED 2A (947 aa).

Positions 10-90 (YSWWWASHIR…ERYDHLSREL (81 aa)) constitute an NAB domain. Residues 105-131 (VQFPLEDDSDENEDYDGRPRKPPKHLH) form a disordered region. The span at 109–118 (LEDDSDENED) shows a compositional bias: acidic residues. 2 coiled-coil regions span residues 348–454 (KLAE…IQDV) and 568–619 (VLRD…QKLD). Basic and acidic residues-rich tracts occupy residues 618–627 (LDTTGKDSPH) and 635–644 (LEHEQGHHET). 3 disordered regions span residues 618 to 675 (LDTT…RTKS), 743 to 763 (RIES…AVAS), and 911 to 947 (KNRQ…KLPE). Polar residues predominate over residues 645–660 (VSISPTSNFSVATTPH). The span at 662 to 675 (QVGDVKRTPGRTKS) shows a compositional bias: basic and acidic residues. Residues 722-809 (VHQIQKYQTT…LANIQEEIAR (88 aa)) are a coiled coil. Polar residues-rich tracts occupy residues 749-761 (QQES…NTAV) and 915-927 (QKQS…SCVS).

This sequence belongs to the NET family. Expressed specifically in pollen.

It is found in the cell membrane. Plant-specific actin binding protein. Associates with F-actin at the plasma membrane in growing pollen tubes. May be part of a membrane-cytoskeletal adapter complex. This Arabidopsis thaliana (Mouse-ear cress) protein is Protein NETWORKED 2A.